Reading from the N-terminus, the 117-residue chain is UPF0102 protein Swoo_0351 (117 aa).

It belongs to the UPF0102 family.

This chain is UPF0102 protein Swoo_0351, found in Shewanella woodyi (strain ATCC 51908 / MS32).